Reading from the N-terminus, the 129-residue chain is UPF0102 protein Cag_1992 (129 aa).

Belongs to the UPF0102 family.

The sequence is that of UPF0102 protein Cag_1992 from Chlorobium chlorochromatii (strain CaD3).